The following is a 338-amino-acid chain: MNLNRFERYPLTFGPSPITPLKRLSQHLGGKVELYAKREDCNSGLAFGGNKTRKLEYLIPEAIEQGCDTLVSIGGIQSNQTRQVAAVAAHLGMKCVLVQENWVNYSDAVYDRVGNIEMSRIMGADVRLDAAGFDIGIRPSWEKAMSDVVEQGGKPFPIPAGCSEHPYGGLGFVGFAKKLRQQEKELGFKFNYIVVCSVTGSTQAGMVVGFAADGRSKNVIGVDASAKPEQTKAQILRIARHTAELVELGREITEEDVVLDTRFAYPEYGLPNEGTLEAIRLCGSLEGVLTDPVYEGKSMHGMIEMVRRGEFPEGSKVLYAHLGGAPALNAYSFLFRDG.

N6-(pyridoxal phosphate)lysine is present on K51. Catalysis depends on S78, which acts as the Nucleophile.

Belongs to the ACC deaminase/D-cysteine desulfhydrase family. Requires pyridoxal 5'-phosphate as cofactor.

The enzyme catalyses 1-aminocyclopropane-1-carboxylate + H2O = 2-oxobutanoate + NH4(+). Its function is as follows. Catalyzes a cyclopropane ring-opening reaction, the irreversible conversion of 1-aminocyclopropane-1-carboxylate (ACC) to ammonia and alpha-ketobutyrate. Allows growth on ACC as a nitrogen source. The polypeptide is 1-aminocyclopropane-1-carboxylate deaminase (Enterobacter cloacae).